Consider the following 421-residue polypeptide: Subtilisin-like protease 2 (421 aa).

An N-terminal signal peptide occupies residues 1-16 (MQLLNFGLLLLPFVAG). A propeptide spanning residues 17-122 (DLAPQPEPLL…VHPDQHFYLA (106 aa)) is cleaved from the precursor. Residues 36-121 (QYLVTLKEGL…SVHPDQHFYL (86 aa)) form the Inhibitor I9 domain. The region spanning 131 to 421 (RWGLGYMSSK…ERKCKLPKYY (291 aa)) is the Peptidase S8 domain. The Charge relay system role is filled by D169. Residue N192 is glycosylated (N-linked (GlcNAc...) asparagine). H201 serves as the catalytic Charge relay system. N248, N261, and N348 each carry an N-linked (GlcNAc...) asparagine glycan. Residue S357 is the Charge relay system of the active site. An N-linked (GlcNAc...) asparagine glycan is attached at N388.

It belongs to the peptidase S8 family.

The protein resides in the secreted. Functionally, secreted subtilisin-like serine protease with keratinolytic activity that contributes to pathogenicity. This Trichophyton rubrum (Athlete's foot fungus) protein is Subtilisin-like protease 2 (SUB2).